The sequence spans 83 residues: Small ribosomal subunit protein bS16 (83 aa).

It belongs to the bacterial ribosomal protein bS16 family.

The polypeptide is Small ribosomal subunit protein bS16 (Shewanella frigidimarina (strain NCIMB 400)).